Here is a 695-residue protein sequence, read N- to C-terminus: Ubiquitin carboxyl-terminal hydrolase 20 (695 aa).

2 disordered regions span residues 1-20 (MLMAKPDVPSSILPRSSSIL) and 42-162 (SLAL…SLFY). Composition is skewed to low complexity over residues 9-20 (PSSILPRSSSIL) and 61-86 (NHDSVSIPPPIYDGYSSSSSDESQSV). Positions 112 to 124 (DDIDDDIWGDDDL) are enriched in acidic residues. The 301-residue stretch at 176 to 476 (AGLWNLGNSC…DSYILFYARE (301 aa)) folds into the USP domain. The active-site Nucleophile is Cys185. The active-site Proton acceptor is the His435. Residues 556-571 (SAESSSGEESPMGELL) show a composition bias toward low complexity. 2 disordered regions span residues 556-585 (SAESSSGEESPMGELLDPLDPDDSYSPCTE) and 674-695 (ARELLDQAISTNGSPPKKLKTT).

Belongs to the peptidase C19 family.

The enzyme catalyses Thiol-dependent hydrolysis of ester, thioester, amide, peptide and isopeptide bonds formed by the C-terminal Gly of ubiquitin (a 76-residue protein attached to proteins as an intracellular targeting signal).. In terms of biological role, recognizes and hydrolyzes the peptide bond at the C-terminal Gly of ubiquitin. Involved in the processing of poly-ubiquitin precursors as well as that of ubiquitinated proteins. This is Ubiquitin carboxyl-terminal hydrolase 20 (UBP20) from Arabidopsis thaliana (Mouse-ear cress).